The chain runs to 500 residues: Cytochrome P450 2D4 (500 aa).

C446 contributes to the heme binding site.

The protein belongs to the cytochrome P450 family. Heme is required as a cofactor. In terms of tissue distribution, brain.

The protein localises to the endoplasmic reticulum membrane. The protein resides in the microsome membrane. It catalyses the reaction an organic molecule + reduced [NADPH--hemoprotein reductase] + O2 = an alcohol + oxidized [NADPH--hemoprotein reductase] + H2O + H(+). Its function is as follows. Cytochromes P450 are a group of heme-thiolate monooxygenases. In liver microsomes, this enzyme is involved in an NADPH-dependent electron transport pathway. It oxidizes a variety of structurally unrelated compounds, including steroids, fatty acids, and xenobiotics. The polypeptide is Cytochrome P450 2D4 (Cyp2d4) (Rattus norvegicus (Rat)).